Reading from the N-terminus, the 198-residue chain is ATP-dependent Clp protease proteolytic subunit (198 aa).

Residue serine 98 is the Nucleophile of the active site. The active site involves histidine 123.

The protein belongs to the peptidase S14 family. In terms of assembly, fourteen ClpP subunits assemble into 2 heptameric rings which stack back to back to give a disk-like structure with a central cavity, resembling the structure of eukaryotic proteasomes.

The protein resides in the cytoplasm. The enzyme catalyses Hydrolysis of proteins to small peptides in the presence of ATP and magnesium. alpha-casein is the usual test substrate. In the absence of ATP, only oligopeptides shorter than five residues are hydrolyzed (such as succinyl-Leu-Tyr-|-NHMec, and Leu-Tyr-Leu-|-Tyr-Trp, in which cleavage of the -Tyr-|-Leu- and -Tyr-|-Trp bonds also occurs).. Its function is as follows. Cleaves peptides in various proteins in a process that requires ATP hydrolysis. Has a chymotrypsin-like activity. Plays a major role in the degradation of misfolded proteins. This chain is ATP-dependent Clp protease proteolytic subunit, found in Bacillus velezensis (strain DSM 23117 / BGSC 10A6 / LMG 26770 / FZB42) (Bacillus amyloliquefaciens subsp. plantarum).